The chain runs to 510 residues: MHSTNKSHNNSLANAWLKLGIISLGLGGLYSIILVVLRTPQLSSFFLNQRIFKSALIIHVNLSILIWLLSITASVWGNETSLRLVKRRGIFIPFGLLREIVTFYTFDRNDVLYIYPKLAFFATLLIAISPLAGYNTVTNNYIPMLANIVFILGLSLFGVTLLLYAINILYLFDWMKLNNLVNVTVFSTIIMFILSFVCFGWSYKSLQKIIQIIPIEIEFYYELLFWSGGHLLQFIYTQILIFIWVSLLRTITVRELKFQTFYLFILYLNFVFSILILFGHISYDIIDIAFKEFYTDHMKYLGGIAPILCLVGMVVELVLMSYRDKLVLLIYRLSTKSSKIKKDCITLSNHRTHSIIKTILLCSITLFLLGGLIAININDINLVIPAHYHGSIVGISIACMGYSYQTIIPLMDHDIHKTTKQYLITLSINWIKFAIYLLTFGQILHILGLAFSGIYGVMRKDPNSIVPMSSKLLMGMMGIGGLIAIVGGLMFVYICGKTMFFLKGMKLEYE.

12 helical membrane passes run 17–37, 56–76, 111–131, 148–168, 180–200, 223–243, 261–281, 300–320, 355–375, 382–402, 434–454, and 472–492; these read LKLG…LVVL, LIIH…ASVW, VLYI…ISPL, IVFI…AINI, LVNV…VCFG, LLFW…LIFI, FYLF…FGHI, YLGG…LVLM, IIKT…LIAI, LVIP…CMGY, AIYL…FSGI, and LLMG…LMFV.

This sequence to A.aeolicus AQ_155.

It is found in the cell membrane. This is an uncharacterized protein from Rickettsia prowazekii (strain Madrid E).